The chain runs to 1530 residues: DNA-directed RNA polymerase III subunit RPC1 (1530 aa).

The Zn(2+) site is built by cysteine 74, cysteine 77, cysteine 84, histidine 87, cysteine 114, cysteine 117, and cysteine 161. Aspartate 503, aspartate 505, and aspartate 507 together coordinate Mg(2+). The bridging helix stretch occupies residues 846-858 (PTEFFFHTMAGRE). Residues 992-1001 (EEQESREDAL) show a composition bias toward basic and acidic residues. Disordered regions lie at residues 992–1016 (EEQE…SRPR) and 1057–1099 (NLLN…SKEG).

Belongs to the RNA polymerase beta' chain family. As to quaternary structure, component of the RNA polymerase III (Pol III) complex consisting of 17 subunits.

It localises to the nucleus. It catalyses the reaction RNA(n) + a ribonucleoside 5'-triphosphate = RNA(n+1) + diphosphate. DNA-dependent RNA polymerase catalyzes the transcription of DNA into RNA using the four ribonucleoside triphosphates as substrates. Largest and catalytic core component of RNA polymerase III which synthesizes small RNAs, such as 5S rRNA and tRNAs. Forms the polymerase active center together with the second largest subunit. A single-stranded DNA template strand of the promoter is positioned within the central active site cleft of Pol III. A bridging helix emanates from RPC1 and crosses the cleft near the catalytic site and is thought to promote translocation of Pol III by acting as a ratchet that moves the RNA-DNA hybrid through the active site by switching from straight to bent conformations at each step of nucleotide addition. The chain is DNA-directed RNA polymerase III subunit RPC1 from Trypanosoma brucei brucei.